A 142-amino-acid polypeptide reads, in one-letter code: Hemoglobin subunit theta-1 (142 aa).

The Globin domain occupies 2–142 (ALSAEDRALV…VISALASEYR (141 aa)). Heme b contacts are provided by His-59 and His-88.

Belongs to the globin family.

This is Hemoglobin subunit theta-1 (HBQ1) from Pongo pygmaeus (Bornean orangutan).